The primary structure comprises 333 residues: NADH-quinone oxidoreductase subunit H (333 aa).

8 consecutive transmembrane segments (helical) span residues 15–35 (FFIF…FVTY), 88–108 (FILA…VIPF), 117–137 (IGVG…GVVT), 159–179 (ISYE…AGSL), 191–211 (VWYI…AVAE), 239–259 (WAFF…LITV), 272–294 (GFIP…LIWF), and 313–333 (ILLP…ELFF).

Belongs to the complex I subunit 1 family. As to quaternary structure, NDH-1 is composed of 14 different subunits. Subunits NuoA, H, J, K, L, M, N constitute the membrane sector of the complex.

Its subcellular location is the cell membrane. The enzyme catalyses a quinone + NADH + 5 H(+)(in) = a quinol + NAD(+) + 4 H(+)(out). NDH-1 shuttles electrons from NADH, via FMN and iron-sulfur (Fe-S) centers, to quinones in the respiratory chain. The immediate electron acceptor for the enzyme in this species is believed to be ubiquinone. Couples the redox reaction to proton translocation (for every two electrons transferred, four hydrogen ions are translocated across the cytoplasmic membrane), and thus conserves the redox energy in a proton gradient. This subunit may bind ubiquinone. The polypeptide is NADH-quinone oxidoreductase subunit H (Bacillus mycoides (strain KBAB4) (Bacillus weihenstephanensis)).